Consider the following 342-residue polypeptide: Delta(6)-protoilludene synthase 8 (342 aa).

Residue D81 participates in Mg(2+) binding. The DDXXD motif motif lies at 93–97; sequence RDMVD. 3 residues coordinate Mg(2+): N217, S221, and E225. The NSE/DTE motif signature appears at 217 to 225; sequence NDLVSYNRE. Residues R305 and Y306 each contribute to the (2E,6E)-farnesyl diphosphate site.

It belongs to the terpene synthase family. It depends on Mg(2+) as a cofactor.

It carries out the reaction (2E,6E)-farnesyl diphosphate = Delta(6)-protoilludene + diphosphate. In terms of biological role, terpene cyclase that catalyzes the cyclization of farnesyl diphosphate (FPP) to delta(6)-protoilludene. The chain is Delta(6)-protoilludene synthase 8 from Postia placenta (strain ATCC 44394 / Madison 698-R) (Brown rot fungus).